A 533-amino-acid polypeptide reads, in one-letter code: Probable lipid II flippase MurJ (533 aa).

The next 13 helical transmembrane spans lie at 25–45 (ETLM…YAAF), 90–110 (VLFS…PLLV), 131–151 (LAAV…MSGM), 158–178 (FFAA…ALFY), 192–212 (YLSW…YIGV), 233–253 (LLLL…NLVI), 274–294 (IYQL…LPEL), 316–336 (FVLF…DDII), 350–370 (TTLV…FVLI), 389–409 (YTAI…PVLA), 412–432 (GIAL…FVTL), 449–469 (AMLL…SHRW), and 484–504 (GVLG…AFLI).

Belongs to the MurJ/MviN family.

It localises to the cell inner membrane. It participates in cell wall biogenesis; peptidoglycan biosynthesis. Functionally, involved in peptidoglycan biosynthesis. Transports lipid-linked peptidoglycan precursors from the inner to the outer leaflet of the cytoplasmic membrane. The sequence is that of Probable lipid II flippase MurJ from Rhizobium tropici.